Reading from the N-terminus, the 278-residue chain is Indole-3-glycerol phosphate synthase (278 aa).

This sequence belongs to the TrpC family.

It carries out the reaction 1-(2-carboxyphenylamino)-1-deoxy-D-ribulose 5-phosphate + H(+) = (1S,2R)-1-C-(indol-3-yl)glycerol 3-phosphate + CO2 + H2O. Its pathway is amino-acid biosynthesis; L-tryptophan biosynthesis; L-tryptophan from chorismate: step 4/5. The protein is Indole-3-glycerol phosphate synthase of Pseudomonas fluorescens (strain Pf0-1).